Reading from the N-terminus, the 523-residue chain is 2-isopropylmalate synthase (523 aa).

Positions 12–274 constitute a Pyruvate carboxyltransferase domain; sequence VVIFDTTLRD…WNKIDTTQLT (263 aa). Positions 21, 209, 211, and 245 each coordinate Mn(2+). The regulatory domain stretch occupies residues 398-523; it reads KLLSLSVIAG…AQGAAAAAAS (126 aa).

Belongs to the alpha-IPM synthase/homocitrate synthase family. LeuA type 1 subfamily. Homodimer. The cofactor is Mn(2+).

Its subcellular location is the cytoplasm. The catalysed reaction is 3-methyl-2-oxobutanoate + acetyl-CoA + H2O = (2S)-2-isopropylmalate + CoA + H(+). It functions in the pathway amino-acid biosynthesis; L-leucine biosynthesis; L-leucine from 3-methyl-2-oxobutanoate: step 1/4. Its function is as follows. Catalyzes the condensation of the acetyl group of acetyl-CoA with 3-methyl-2-oxobutanoate (2-ketoisovalerate) to form 3-carboxy-3-hydroxy-4-methylpentanoate (2-isopropylmalate). The polypeptide is 2-isopropylmalate synthase (Bradyrhizobium sp. (strain BTAi1 / ATCC BAA-1182)).